A 272-amino-acid polypeptide reads, in one-letter code: Orotidine 5'-phosphate decarboxylase (272 aa).

The Proton donor role is filled by K95.

It belongs to the OMP decarboxylase family. Type 2 subfamily.

The catalysed reaction is orotidine 5'-phosphate + H(+) = UMP + CO2. Its pathway is pyrimidine metabolism; UMP biosynthesis via de novo pathway; UMP from orotate: step 2/2. The polypeptide is Orotidine 5'-phosphate decarboxylase (Cupriavidus metallidurans (strain ATCC 43123 / DSM 2839 / NBRC 102507 / CH34) (Ralstonia metallidurans)).